The sequence spans 179 residues: Peptide deformylase (179 aa).

2 residues coordinate Fe cation: Cys-103 and His-145. Glu-146 is an active-site residue. His-149 is a binding site for Fe cation.

The protein belongs to the polypeptide deformylase family. It depends on Fe(2+) as a cofactor.

It catalyses the reaction N-terminal N-formyl-L-methionyl-[peptide] + H2O = N-terminal L-methionyl-[peptide] + formate. Its function is as follows. Removes the formyl group from the N-terminal Met of newly synthesized proteins. Requires at least a dipeptide for an efficient rate of reaction. N-terminal L-methionine is a prerequisite for activity but the enzyme has broad specificity at other positions. The polypeptide is Peptide deformylase (Leptospira biflexa serovar Patoc (strain Patoc 1 / Ames)).